Here is a 1608-residue protein sequence, read N- to C-terminus: Hemolysin (1608 aa).

A signal peptide spans 1–30; the sequence is MKNNNFRLSAAGKLAAALAIILAASAGAYA. 6 disordered regions span residues 296-315, 452-488, 716-737, 971-1030, 1168-1199, and 1437-1469; these read SRVD…QNYR, KSSE…LRSE, EHTR…LSGG, AVNL…SASQ, AEST…TGGN, and PQQD…QGPL. Composition is skewed to polar residues over residues 303–313 and 460–474; these read SNKNGGDNYQN and RNHT…WSNS. 2 stretches are compositionally biased toward basic and acidic residues: residues 478–488 and 716–726; these read ESLKASELRSE and EHTRDSEKTTR. Polar residues predominate over residues 727-736; the sequence is TENSASSLSG. Residues 977–996 show a composition bias toward basic and acidic residues; sequence DSHRSEAAANRQDEQSRDTR. The span at 1021–1030 shows a compositional bias: polar residues; the sequence is TQRSNSSASQ.

It localises to the cell outer membrane. Functionally, bacterial hemolysins are exotoxins that attack blood cell membranes and cause cell rupture by mechanisms not clearly defined. Cell-bound hemolysin, which releases heme-iron from erythrocytes by interaction with the erythrocyte membrane. ShlA requires ShlB function. This chain is Hemolysin (shlA), found in Serratia marcescens.